A 141-amino-acid chain; its full sequence is Nucleoside triphosphatase NudI (141 aa).

Positions 1–141 (MRQRTIVCPL…RKTLRLKGLL (141 aa)) constitute a Nudix hydrolase domain. Positions 38–59 (GGVEPGERIEEALRREIREELG) match the Nudix box motif.

This sequence belongs to the Nudix hydrolase family. NudI subfamily. As to quaternary structure, monomer. The cofactor is Mg(2+).

It carries out the reaction a ribonucleoside 5'-triphosphate + H2O = a ribonucleoside 5'-phosphate + diphosphate + H(+). It catalyses the reaction a 2'-deoxyribonucleoside 5'-triphosphate + H2O = a 2'-deoxyribonucleoside 5'-phosphate + diphosphate + H(+). The enzyme catalyses dUTP + H2O = dUMP + diphosphate + H(+). The catalysed reaction is dTTP + H2O = dTMP + diphosphate + H(+). It carries out the reaction dCTP + H2O = dCMP + diphosphate + H(+). Functionally, catalyzes the hydrolysis of nucleoside triphosphates, with a preference for pyrimidine deoxynucleoside triphosphates (dUTP, dTTP and dCTP). In Escherichia coli O17:K52:H18 (strain UMN026 / ExPEC), this protein is Nucleoside triphosphatase NudI.